A 165-amino-acid polypeptide reads, in one-letter code: Ubiquitin-conjugating enzyme E2 G2 (165 aa).

The residue at position 2 (A2) is an N-acetylalanine. The 161-residue stretch at 4–164 (TALKRLMAEY…AKQIVQKSLG (161 aa)) folds into the UBC core domain. C89 serves as the catalytic Glycyl thioester intermediate.

The protein belongs to the ubiquitin-conjugating enzyme family. As to quaternary structure, interacts with AUP1 (via C-terminus); the interaction recruits UBE2G2 to lipid droplets. Interacts with ubiquitin ligases AMFR/gp78 and RNF139/TRC8; recruitment to lipid droplets by AUP1 facilitates interaction of UBE2G2 with AMFR and RNF139, leading to sterol-induced ubiquitination of 3-hydroxy-3-methylglutaryl coenzyme A reductase and its subsequent proteasomal degradation.

It localises to the endoplasmic reticulum. Its subcellular location is the lipid droplet. The catalysed reaction is S-ubiquitinyl-[E1 ubiquitin-activating enzyme]-L-cysteine + [E2 ubiquitin-conjugating enzyme]-L-cysteine = [E1 ubiquitin-activating enzyme]-L-cysteine + S-ubiquitinyl-[E2 ubiquitin-conjugating enzyme]-L-cysteine.. It functions in the pathway protein modification; protein ubiquitination. Accepts ubiquitin from the E1 complex and catalyzes its covalent attachment to other proteins. In vitro catalyzes 'Lys-48'-linked polyubiquitination. Involved in endoplasmic reticulum-associated degradation (ERAD). Required for sterol-induced ubiquitination of 3-hydroxy-3-methylglutaryl coenzyme A reductase and its subsequent proteasomal degradation. The chain is Ubiquitin-conjugating enzyme E2 G2 from Homo sapiens (Human).